The primary structure comprises 352 residues: C-C chemokine receptor type 5 (352 aa).

Over 1-30 the chain is Extracellular; it reads MDYQVSSPTYDIDYYTSEPCQKINVKQIAA. Position 3 is a sulfotyrosine (tyrosine 3). Residues serine 6 and serine 7 are each glycosylated (O-linked (GalNAc...) serine). Tyrosine 10, tyrosine 14, and tyrosine 15 each carry sulfotyrosine. Intrachain disulfides connect cysteine 20-cysteine 269 and cysteine 101-cysteine 178. A helical transmembrane segment spans residues 31-58; sequence RLLPPLYSLVFIFGFVGNILVVLILINC. Topologically, residues 59-68 are cytoplasmic; the sequence is KRLKSMTDIY. Residues 69-89 form a helical membrane-spanning segment; that stretch reads LLNLAISDLLFLLTVPFWAHY. Residues 90 to 102 lie on the Extracellular side of the membrane; it reads AAAQWDFGNTMCQ. A helical transmembrane segment spans residues 103–124; sequence LLTGLYFIGFFSGIFFIILLTI. Residues 125-141 lie on the Cytoplasmic side of the membrane; it reads DRYLAIVHAVFALKART. Residues 142–166 form a helical membrane-spanning segment; the sequence is VTFGVVTSVITWVVAVFASLPRIIF. The Extracellular segment spans residues 167 to 198; the sequence is TRSQREGLHYTCSSHFPYSQYQFWKNFQTLKI. The chain crosses the membrane as a helical span at residues 199–218; that stretch reads VILGLVLPLLVMVICYSGIL. The Cytoplasmic segment spans residues 219–235; sequence KTLLRCRNEKKRHRAVR. The helical transmembrane segment at 236-260 threads the bilayer; it reads LIFTIMIVYFLFWAPYNIVLLLNTF. The Extracellular segment spans residues 261–277; the sequence is QEFFGLNNCSSSNRLDQ. A helical membrane pass occupies residues 278–301; that stretch reads AMQVTETLGMTHCCINPIIYAFVG. The Cytoplasmic segment spans residues 302–352; that stretch reads EKFRNYLLVFFQKHIAKRFCKCCSIFQQEAPERASSVYTRSTGEQETSVGL. Residues cysteine 321, cysteine 323, and cysteine 324 are each lipidated (S-palmitoyl cysteine). Serine 336, serine 337, serine 342, and serine 349 each carry phosphoserine; by BARK1.

The protein belongs to the G-protein coupled receptor 1 family. Interacts with PRAF2. Efficient ligand binding to CCL3/MIP-1alpha and CCL4/MIP-1beta requires sulfation, O-glycosylation and sialic acid modifications. Glycosylation on Ser-6 is required for efficient binding of CCL4. Interacts with GRK2. Interacts with ARRB1 and ARRB2. Interacts with CNIH4. Interacts with S100A4; this interaction stimulates T-lymphocyte chemotaxis. In terms of processing, sulfated on at least 2 of the N-terminal tyrosines. Sulfation is required for efficient binding of the chemokines, CCL3 and CCL4. Palmitoylation in the C-terminal is important for cell surface expression. Post-translationally, phosphorylation on serine residues in the C-terminal is stimulated by binding CC chemokines especially by APO-RANTES. In terms of processing, O-glycosylated, but not N-glycosylated. Ser-6 appears to be the major site even if Ser-7 may be also O-glycosylated. Also sialylated glycans present which contribute to chemokine binding. Thr-16 and Ser-17 may also be glycosylated and, if so, with small moieties such as a T-antigen.

Its subcellular location is the cell membrane. Receptor for a number of inflammatory CC-chemokines including CCL3/MIP-1-alpha, CCL4/MIP-1-beta and RANTES and subsequently transduces a signal by increasing the intracellular calcium ion level. May play a role in the control of granulocytic lineage proliferation or differentiation. Participates in T-lymphocyte migration to the infection site by acting as a chemotactic receptor. In Chlorocebus tantalus (Tantalus monkey), this protein is C-C chemokine receptor type 5 (CCR5).